Reading from the N-terminus, the 189-residue chain is Streptothricin acetyltransferase (189 aa).

An N-acetyltransferase domain is found at 44–189; the sequence is FALREVPADP…HALYMSMPCP (146 aa). The segment at 55–76 is disordered; it reads LVKVFPDDGGSDGEDGAEGEDA. Acidic residues predominate over residues 63–75; sequence GGSDGEDGAEGED.

It belongs to the acetyltransferase family. GNAT subfamily.

It catalyses the reaction streptothricin F + acetyl-CoA = N(beta)-acetylstreptothricin F + CoA + H(+). Functionally, involved in resistance to streptothricin, a broad-spectrum antibiotic produced by streptomycetes. Detoxifies streptothricin via acetylation of the beta amino group of the first beta-lysyl moiety of streptothricin. The protein is Streptothricin acetyltransferase of Streptomyces lavendulae.